The sequence spans 613 residues: UBX domain-containing protein 3 (613 aa).

Disordered regions lie at residues Pro-67–Pro-223 and Met-453–Gln-472. A compositionally biased stretch (low complexity) spans Ala-68–Arg-82. Residues Thr-137 to Arg-149 are compositionally biased toward basic residues. Low complexity predominate over residues Ser-158–Ser-169. Residues Arg-452–Thr-517 adopt a coiled-coil conformation. Positions Pro-531–Val-610 constitute a UBX domain. The Interaction with cdc-48 signature appears at Phe-582–Lys-584.

In terms of assembly, forms a complex composed of ubxn-3, cdc-48.1, ufd-1 and npl-4.1. Forms a complex composed of ubxn-3, cdc-48.1 and/or cdc-48.2 and substrate cdt-1. Interacts (via FPK motif) with cdc-48.1 (via N-terminus) and cdc-48.2 (via N-terminus). Interacts (via N-terminus) with cdt-1 and ubiquitinated protein substrates; the interaction is cdc-48-independent. May interact with npl-4.1. As to expression, expressed in the germline (at protein level). Expressed in spermatocytes but not in mature sperm (at protein level). Expressed in the spermatheca and nerve cells.

The protein resides in the nucleus. It localises to the cytoplasm. The protein localises to the perinuclear region. Its subcellular location is the chromosome. In terms of biological role, ubiquitin-binding protein which acts as an adapter for ATPase cdc-48.1 and/or cdc-48.2, conferring substrate specificity. Together with ubxn-1 and ubxn-2, plays a role in hermaphrodite spermatogenesis probably by promoting the degradation of sex determination terminal factor tra-1. During mitosis, ensures the degradation of DNA licensing factor cdt-1 and the disassembly of the DNA replication CMG helicase complex by promoting the dissociation from chromatin of several of its components including cdc-45 and sld-5. This Caenorhabditis elegans protein is UBX domain-containing protein 3.